We begin with the raw amino-acid sequence, 712 residues long: Protein TAPT1 homolog (712 aa).

Low complexity predominate over residues 1–21; sequence MNNVPSTSRENSRNPSESSSS. 2 disordered regions span residues 1–22 and 44–66; these read MNNVPSTSRENSRNPSESSSSI and ITMSAPPSPATPRKIDFSAEIET. 7 helical membrane-spanning segments follow: residues 196–216, 222–242, 305–325, 379–399, 402–422, 470–490, and 497–517; these read FFYLFTFLPLRFLMSIFGALL, TSAETCDFLKVVIIVAASMLI, TCGHLIVAILYATLHSFLVIL, HIFALLFVVMIRNMTAVNWNI, FTEMIPDIIMVVGCEYFVDWL, GFIPIPLSIMIIRVLSQTFTL, and IIFGIGWLLVFAVKICNGVVM. Over residues 596-619 the composition is skewed to basic and acidic residues; sequence EIRRSTDRETAVSHLTARSDERTP. The segment at 596 to 712 is disordered; the sequence is EIRRSTDRET…MPEQGVQRIE (117 aa). Positions 656–667 are enriched in polar residues; the sequence is TENNTNSNSEQA. Over residues 675 to 692 the composition is skewed to low complexity; it reads TAAPVTSSASTNTNATSS.

Belongs to the TAPT1 family.

The protein localises to the membrane. This is Protein TAPT1 homolog from Caenorhabditis elegans.